The chain runs to 322 residues: Gluconeogenesis factor (322 aa).

Residues Thr13, 217 to 219 (NVM), 263 to 267 (KYAKE), and 300 to 301 (RH) contribute to the NAD(+) site.

Belongs to the gluconeogenesis factor family.

It is found in the cytoplasm. Its function is as follows. Required for morphogenesis under gluconeogenic growth conditions. This is Gluconeogenesis factor from Halalkalibacterium halodurans (strain ATCC BAA-125 / DSM 18197 / FERM 7344 / JCM 9153 / C-125) (Bacillus halodurans).